Consider the following 149-residue polypeptide: Cytochrome c-555 (149 aa).

The first 20 residues, Met-1–Ala-20, serve as a signal peptide directing secretion. The heme c site is built by Met-32, Cys-137, Cys-140, and His-141.

As to quaternary structure, monomer. Binds 1 heme c group covalently per subunit.

It is found in the periplasm. Low-spin monoheme cytochrome. The polypeptide is Cytochrome c-555 (cycC) (Bradyrhizobium diazoefficiens (strain JCM 10833 / BCRC 13528 / IAM 13628 / NBRC 14792 / USDA 110)).